We begin with the raw amino-acid sequence, 523 residues long: MASQDQNTGTTHVELQGGENSKKLFSKYDLWSKAMDEKKLSSSLFTVNDTQEFLELCEACRRGDLEVVKSLVENYNTPINQVDQFDYSPLVLASLCGHEPVVKFLLENGALCERDTFQGERCLYGALNDNIRRMLLSYDITKAIDESQPYASHITSLLSNSALHFTTDIVFAGQYGRVFAHKFYLAARSSYFKSKFSKLGPSEHEIEVKHFAKEFESILRYLYLDTNAVFTKQYNNALLSIGKKFQLNDFIALYEKDREQLHSRDWKKIQLAKTQNDLGEFLDYIISNYKVPIESLNQPSDQYSFHDAYLQSYTHRYPVHRAIMCRCEYFLDMLAGPFLESNQELPVLSLPFSSSVVEIVLKFLYTDKTDIAPELALDVVYVADMLSLDKDRSLKSLASIVITKQEEPIDSIYDILRTAWDTSTPRLEQYASEYMANHLEHLIDDPEFCELVKESADRILQRQETDTIELIDDIRYFLSKRFGIYHEDLCIDGVVDTLTPYESEYNQKMEMIDDLLDKLELQA.

The ANK repeat unit spans residues 85–114 (FDYSPLVLASLCGHEPVVKFLLENGALCER). BTB domains are found at residues 167-223 (TDIV…RYLY) and 306-373 (HDAY…DIAP).

In terms of assembly, interacts with cul3. Post-translationally, ubiquitinated and targeted for cul3-dependent degradation.

The protein localises to the cytoplasm. The protein operates within protein modification; protein ubiquitination. Its function is as follows. Probable substrate-specific adapter of an E3 ubiquitin-protein ligase complex which mediates the ubiquitination and subsequent proteasomal degradation of target proteins. The protein is BTB/POZ domain-containing protein 3 (btb3) of Schizosaccharomyces pombe (strain 972 / ATCC 24843) (Fission yeast).